A 216-amino-acid polypeptide reads, in one-letter code: GTP cyclohydrolase-2 (216 aa).

51–55 contacts GTP; that stretch reads RIHSE. The Zn(2+) site is built by Cys-56, Cys-67, and Cys-69. GTP contacts are provided by residues Gln-72, 94-96, and Thr-116; that span reads EGR. The active-site Proton acceptor is the Asp-128. Arg-130 functions as the Nucleophile in the catalytic mechanism. GTP is bound by residues Thr-151 and Lys-156.

This sequence belongs to the GTP cyclohydrolase II family. Zn(2+) serves as cofactor.

The enzyme catalyses GTP + 4 H2O = 2,5-diamino-6-hydroxy-4-(5-phosphoribosylamino)-pyrimidine + formate + 2 phosphate + 3 H(+). It functions in the pathway cofactor biosynthesis; riboflavin biosynthesis; 5-amino-6-(D-ribitylamino)uracil from GTP: step 1/4. Functionally, catalyzes the conversion of GTP to 2,5-diamino-6-ribosylamino-4(3H)-pyrimidinone 5'-phosphate (DARP), formate and pyrophosphate. This is GTP cyclohydrolase-2 from Haemophilus influenzae (strain 86-028NP).